We begin with the raw amino-acid sequence, 311 residues long: HPr kinase/phosphorylase (311 aa).

Catalysis depends on residues His138 and Lys159. Residue 153–160 (GKSGVGKS) participates in ATP binding. Position 160 (Ser160) interacts with Mg(2+). Asp177 (proton acceptor; for phosphorylation activity. Proton donor; for dephosphorylation activity) is an active-site residue. Positions 201-210 (LEIRGLGIIN) are important for the catalytic mechanism of both phosphorylation and dephosphorylation. Glu202 provides a ligand contact to Mg(2+). Residue Arg243 is part of the active site. The interval 264-269 (PVRPGR) is important for the catalytic mechanism of dephosphorylation.

This sequence belongs to the HPrK/P family. As to quaternary structure, homohexamer. Requires Mg(2+) as cofactor.

It carries out the reaction [HPr protein]-L-serine + ATP = [HPr protein]-O-phospho-L-serine + ADP + H(+). It catalyses the reaction [HPr protein]-O-phospho-L-serine + phosphate + H(+) = [HPr protein]-L-serine + diphosphate. Catalyzes the ATP- as well as the pyrophosphate-dependent phosphorylation of a specific serine residue in HPr, a phosphocarrier protein of the phosphoenolpyruvate-dependent sugar phosphotransferase system (PTS). HprK/P also catalyzes the pyrophosphate-producing, inorganic phosphate-dependent dephosphorylation (phosphorolysis) of seryl-phosphorylated HPr (P-Ser-HPr). The two antagonistic activities of HprK/P are regulated by several intracellular metabolites, which change their concentration in response to the absence or presence of rapidly metabolisable carbon sources (glucose, fructose, etc.) in the growth medium. Also phosphorylates/dephosphorylates the HPr-like catabolite repression protein crh on a specific serine residue. Therefore, by controlling the phosphorylation state of HPr and crh, HPrK/P is a sensor enzyme that plays a major role in the regulation of carbon metabolism and sugar transport: it mediates carbon catabolite repression (CCR), and regulates PTS-catalyzed carbohydrate uptake and inducer exclusion. The sequence is that of HPr kinase/phosphorylase from Geobacillus kaustophilus (strain HTA426).